The primary structure comprises 176 residues: MDLPKTLHDFLLVFLGSGLILGSLGVVLLTNPIFSAFSLGLTLVCISLLYILSNSHFVAASQLLIYVGAINVLIIFGVMFMNGSEYYQDFRLWTVGDGMTLMVCTSIFISLITTIPDTSWYGIIWTTRSNQIIEQDLISTSQQIGIHLSTDFFLPFELISIILLAALIGAIVVARQ.

5 consecutive transmembrane segments (helical) span residues 10–30, 32–52, 63–83, 92–112, and 152–172; these read FLLVFLGSGLILGSLGVVLLT, PIFSAFSLGLTLVCISLLYIL, LLIYVGAINVLIIFGVMFMNG, LWTVGDGMTLMVCTSIFISLI, and FFLPFELISIILLAALIGAIV.

This sequence belongs to the complex I subunit 6 family. NDH is composed of at least 16 different subunits, 5 of which are encoded in the nucleus.

It is found in the plastid. It localises to the chloroplast thylakoid membrane. It catalyses the reaction a plastoquinone + NADH + (n+1) H(+)(in) = a plastoquinol + NAD(+) + n H(+)(out). The catalysed reaction is a plastoquinone + NADPH + (n+1) H(+)(in) = a plastoquinol + NADP(+) + n H(+)(out). NDH shuttles electrons from NAD(P)H:plastoquinone, via FMN and iron-sulfur (Fe-S) centers, to quinones in the photosynthetic chain and possibly in a chloroplast respiratory chain. The immediate electron acceptor for the enzyme in this species is believed to be plastoquinone. Couples the redox reaction to proton translocation, and thus conserves the redox energy in a proton gradient. The chain is NAD(P)H-quinone oxidoreductase subunit 6, chloroplastic (ndhG) from Lotus japonicus (Lotus corniculatus var. japonicus).